A 513-amino-acid chain; its full sequence is OTU domain-containing protein 5-A (513 aa).

Disordered stretches follow at residues 1–75 (MTIL…GGAG) and 99–136 (GPGHSKRRRQVLSAGPGATGNCPDTDDGAGNNSEDEYE). Residues 166-289 (FIIKQMKEDG…NIHYNSVVNP (124 aa)) enclose the OTU domain. Positions 171-177 (MKEDGAC) are cys-loop. Aspartate 174 is an active-site residue. The active-site Nucleophile is cysteine 177. Positions 226-236 (KRKNNCHGNHI) are variable-loop. The tract at residues 277 to 282 (YHRNIH) is his-loop. The active site involves histidine 282. Residues 387-446 (LEEWSGRSPRQRSTAGSPEHPDLHAELCMKPPSPGAPLILGKPPSPCAPGPSNQMSTGAD) form a disordered region.

This sequence belongs to the peptidase C85 family.

The catalysed reaction is Thiol-dependent hydrolysis of ester, thioester, amide, peptide and isopeptide bonds formed by the C-terminal Gly of ubiquitin (a 76-residue protein attached to proteins as an intracellular targeting signal).. Deubiquitinating enzyme that may function as negative regulator of the innate immune system. Has peptidase activity towards 'Lys-48'- and 'Lys-63'-linked polyubiquitin chains. Can also cleave 'Lys-11'-linked ubiquitin chains (in vitro). In Xenopus laevis (African clawed frog), this protein is OTU domain-containing protein 5-A (otud5-a).